Here is a 635-residue protein sequence, read N- to C-terminus: Threonine--tRNA ligase (635 aa).

The TGS domain occupies 1–61; the sequence is MIKITLKDGS…KEDAALELLT (61 aa). Residues 242 to 532 are catalytic; sequence DHRKLGQELD…LTEHFAGAFP (291 aa). Zn(2+)-binding residues include cysteine 333, histidine 384, and histidine 509.

The protein belongs to the class-II aminoacyl-tRNA synthetase family. As to quaternary structure, homodimer. The cofactor is Zn(2+).

The protein localises to the cytoplasm. The enzyme catalyses tRNA(Thr) + L-threonine + ATP = L-threonyl-tRNA(Thr) + AMP + diphosphate + H(+). In terms of biological role, catalyzes the attachment of threonine to tRNA(Thr) in a two-step reaction: L-threonine is first activated by ATP to form Thr-AMP and then transferred to the acceptor end of tRNA(Thr). Also edits incorrectly charged L-seryl-tRNA(Thr). This is Threonine--tRNA ligase from Desulforamulus reducens (strain ATCC BAA-1160 / DSM 100696 / MI-1) (Desulfotomaculum reducens).